Reading from the N-terminus, the 347-residue chain is Protein RecA (347 aa).

An ATP-binding site is contributed by 67–74; the sequence is GPESSGKT. The segment at 326–347 is disordered; sequence DKLLPGRAPSSEAQGTESGQEA. Polar residues predominate over residues 336 to 347; sequence SEAQGTESGQEA.

Belongs to the RecA family.

The protein resides in the cytoplasm. In terms of biological role, can catalyze the hydrolysis of ATP in the presence of single-stranded DNA, the ATP-dependent uptake of single-stranded DNA by duplex DNA, and the ATP-dependent hybridization of homologous single-stranded DNAs. It interacts with LexA causing its activation and leading to its autocatalytic cleavage. The protein is Protein RecA of Alkalilimnicola ehrlichii (strain ATCC BAA-1101 / DSM 17681 / MLHE-1).